A 95-amino-acid chain; its full sequence is Aspartyl/glutamyl-tRNA(Asn/Gln) amidotransferase subunit C (95 aa).

Belongs to the GatC family. Heterotrimer of A, B and C subunits.

It carries out the reaction L-glutamyl-tRNA(Gln) + L-glutamine + ATP + H2O = L-glutaminyl-tRNA(Gln) + L-glutamate + ADP + phosphate + H(+). The enzyme catalyses L-aspartyl-tRNA(Asn) + L-glutamine + ATP + H2O = L-asparaginyl-tRNA(Asn) + L-glutamate + ADP + phosphate + 2 H(+). Allows the formation of correctly charged Asn-tRNA(Asn) or Gln-tRNA(Gln) through the transamidation of misacylated Asp-tRNA(Asn) or Glu-tRNA(Gln) in organisms which lack either or both of asparaginyl-tRNA or glutaminyl-tRNA synthetases. The reaction takes place in the presence of glutamine and ATP through an activated phospho-Asp-tRNA(Asn) or phospho-Glu-tRNA(Gln). The polypeptide is Aspartyl/glutamyl-tRNA(Asn/Gln) amidotransferase subunit C (Methylorubrum extorquens (strain CM4 / NCIMB 13688) (Methylobacterium extorquens)).